Reading from the N-terminus, the 383-residue chain is Acetylornithine deacetylase (383 aa).

Residue H80 participates in Zn(2+) binding. The active site involves D82. D112 lines the Zn(2+) pocket. E144 is a catalytic residue. Zn(2+)-binding residues include E145, E169, and H355.

This sequence belongs to the peptidase M20A family. ArgE subfamily. Homodimer. Requires Zn(2+) as cofactor. Co(2+) is required as a cofactor. The cofactor is glutathione.

It is found in the cytoplasm. It carries out the reaction N(2)-acetyl-L-ornithine + H2O = L-ornithine + acetate. The protein operates within amino-acid biosynthesis; L-arginine biosynthesis; L-ornithine from N(2)-acetyl-L-ornithine (linear): step 1/1. Catalyzes the hydrolysis of the amide bond of N(2)-acetylated L-amino acids. Cleaves the acetyl group from N-acetyl-L-ornithine to form L-ornithine, an intermediate in L-arginine biosynthesis pathway, and a branchpoint in the synthesis of polyamines. The protein is Acetylornithine deacetylase of Shigella boydii serotype 4 (strain Sb227).